The primary structure comprises 156 residues: Endoribonuclease YbeY (156 aa).

Zn(2+) contacts are provided by His117, His121, and His127.

Belongs to the endoribonuclease YbeY family. Zn(2+) serves as cofactor.

The protein resides in the cytoplasm. Its function is as follows. Single strand-specific metallo-endoribonuclease involved in late-stage 70S ribosome quality control and in maturation of the 3' terminus of the 16S rRNA. In Shewanella halifaxensis (strain HAW-EB4), this protein is Endoribonuclease YbeY.